A 230-amino-acid polypeptide reads, in one-letter code: Large ribosomal subunit protein uL1 (230 aa).

Belongs to the universal ribosomal protein uL1 family. As to quaternary structure, part of the 50S ribosomal subunit.

Its function is as follows. Binds directly to 23S rRNA. The L1 stalk is quite mobile in the ribosome, and is involved in E site tRNA release. In terms of biological role, protein L1 is also a translational repressor protein, it controls the translation of the L11 operon by binding to its mRNA. In Leuconostoc citreum (strain KM20), this protein is Large ribosomal subunit protein uL1.